Here is a 44-residue protein sequence, read N- to C-terminus: Photosystem I reaction center subunit IX (44 aa).

A helical transmembrane segment spans residues 7 to 27 (YLSTAPVLATLWFSSLAGLLI).

It belongs to the PsaJ family.

Its subcellular location is the plastid. The protein resides in the chloroplast thylakoid membrane. In terms of biological role, may help in the organization of the PsaE and PsaF subunits. This chain is Photosystem I reaction center subunit IX, found in Welwitschia mirabilis (Tree tumbo).